The chain runs to 498 residues: E3 ubiquitin-protein ligase TRIM22 (498 aa).

The RING-type zinc finger occupies 15-60 (CPICLELLTEPLSLDCGHSFCQACITAKIKESVIISRGESSCPVCQ). The segment at 92–133 (QKRDVCEHHGKKLQIFCKEDGKVICWVCELSQEHQGHQTFRI) adopts a B box-type zinc-finger fold. Zn(2+) is bound by residues Cys-97, His-100, Cys-119, and His-125. Positions 132–248 (RINEVVKECQ…RRLRGSSVEM (117 aa)) form a coiled coil. Residues 257 to 275 (KRSESWTLKKPKSVSKKLK) carry the Nuclear localization signal motif. A B30.2/SPRY domain is found at 283-498 (LSGMLQVLKE…VPMTVCPPSS (216 aa)).

This sequence belongs to the TRIM/RBCC family. In terms of assembly, homotrimer. As to quaternary structure, (Microbial infection) Interacts with HIV-1 Gag polyprotein; this interaction seems to reduce gag production or virus budding. (Microbial infection) Interacts with EMCV protease 3C; this interaction leads to viral protease ubiquitination. Auto-ubiquitinated. Strongly expressed in peripheral blood leukocytes, spleen, thymus, and ovary. Expressed at basal levels in other tissues.

The protein resides in the cytoplasm. Its subcellular location is the nucleus. It is found in the nucleus speckle. It localises to the cajal body. The enzyme catalyses S-ubiquitinyl-[E2 ubiquitin-conjugating enzyme]-L-cysteine + [acceptor protein]-L-lysine = [E2 ubiquitin-conjugating enzyme]-L-cysteine + N(6)-ubiquitinyl-[acceptor protein]-L-lysine.. It participates in protein modification; protein ubiquitination. Interferon-induced E3 ubiquitin ligase that plays important roles in innate and adaptive immunity. Restricts the replication of many viruses including HIV-1, encephalomyocarditis virus (EMCV), hepatitis B virus (HBV), hepatitis C virus (HCV) or Zika virus (ZIKV). Mechanistically, negatively regulates HCV replication by promoting ubiquitination and subsequent degradation of viral NS5A. Also acts by promoting the degradation of Zika virus NS1 and NS3 proteins through proteasomal degradation. Acts as a suppressor of basal HIV-1 LTR-driven transcription by preventing Sp1 binding to the HIV-1 promoter. Also plays a role in antiviral immunity by co-regulating together with NT5C2 the RIGI/NF-kappa-B pathway by promoting 'Lys-63'-linked ubiquitination of RIGI, while NT5C2 is responsible for 'Lys-48'-linked ubiquitination of RIGI. Participates in adaptive immunity by suppressing the amount of MHC class II protein in a negative feedback manner in order to limit the extent of MHC class II induction. The protein is E3 ubiquitin-protein ligase TRIM22 (TRIM22) of Homo sapiens (Human).